The following is a 102-amino-acid chain: Small ribosomal subunit protein uS10 (102 aa).

Belongs to the universal ribosomal protein uS10 family. In terms of assembly, part of the 30S ribosomal subunit.

Its function is as follows. Involved in the binding of tRNA to the ribosomes. This chain is Small ribosomal subunit protein uS10, found in Thermotoga neapolitana (strain ATCC 49049 / DSM 4359 / NBRC 107923 / NS-E).